A 513-amino-acid polypeptide reads, in one-letter code: Xylose import ATP-binding protein XylG (513 aa).

2 consecutive ABC transporter domains span residues 5-242 (LEMK…VGRE) and 259-505 (LRIE…LRSE). Residue 37–44 (GENGSGKS) coordinates ATP.

The protein belongs to the ABC transporter superfamily. Xylose importer (TC 3.A.1.2.4) family. In terms of assembly, the complex is composed of two ATP-binding proteins (XylG), two transmembrane proteins (XylH) and a solute-binding protein (XylF).

It is found in the cell inner membrane. The catalysed reaction is D-xylose(out) + ATP + H2O = D-xylose(in) + ADP + phosphate + H(+). Functionally, part of the ABC transporter complex XylFGH involved in xylose import. Responsible for energy coupling to the transport system. The XylFGH system can also transport ribose in absence of xylose. The protein is Xylose import ATP-binding protein XylG of Escherichia coli (strain K12).